We begin with the raw amino-acid sequence, 312 residues long: Homoserine O-acetyltransferase (312 aa).

The Acyl-thioester intermediate role is filled by Cys-142. Substrate-binding residues include Lys-163 and Ser-192. His-235 serves as the catalytic Proton acceptor. Glu-237 is a catalytic residue. Residue Arg-249 participates in substrate binding.

This sequence belongs to the MetA family.

The protein resides in the cytoplasm. It carries out the reaction L-homoserine + acetyl-CoA = O-acetyl-L-homoserine + CoA. The protein operates within amino-acid biosynthesis; L-methionine biosynthesis via de novo pathway; O-acetyl-L-homoserine from L-homoserine: step 1/1. Its function is as follows. Transfers an acetyl group from acetyl-CoA to L-homoserine, forming acetyl-L-homoserine. This is Homoserine O-acetyltransferase from Chelativorans sp. (strain BNC1).